Reading from the N-terminus, the 103-residue chain is Large ribosomal subunit protein bL21 (103 aa).

The protein belongs to the bacterial ribosomal protein bL21 family. As to quaternary structure, part of the 50S ribosomal subunit. Contacts protein L20.

This protein binds to 23S rRNA in the presence of protein L20. The polypeptide is Large ribosomal subunit protein bL21 (Vibrio cholerae serotype O1 (strain ATCC 39541 / Classical Ogawa 395 / O395)).